A 369-amino-acid polypeptide reads, in one-letter code: Arsenite methyltransferase (369 aa).

Ser46 is subject to Phosphoserine.

Belongs to the methyltransferase superfamily. Arsenite methyltransferase family.

It localises to the cytoplasm. It is found in the cytosol. The enzyme catalyses arsenic triglutathione + [thioredoxin]-dithiol + S-adenosyl-L-methionine + 2 H2O = methylarsonous acid + [thioredoxin]-disulfide + 3 glutathione + S-adenosyl-L-homocysteine + H(+). It carries out the reaction arsenic triglutathione + 2 [thioredoxin]-dithiol + 2 S-adenosyl-L-methionine + H2O = dimethylarsinous acid + 2 [thioredoxin]-disulfide + 3 glutathione + 2 S-adenosyl-L-homocysteine + 2 H(+). It catalyses the reaction arsenic triglutathione + 3 [thioredoxin]-dithiol + 3 S-adenosyl-L-methionine = trimethylarsine + 3 [thioredoxin]-disulfide + 3 glutathione + 3 S-adenosyl-L-homocysteine + 3 H(+). Catalyzes the transfer of a methyl group from AdoMet to trivalent arsenicals producing methylated and dimethylated arsenicals. It methylates arsenite to form methylarsonate, Me-AsO(3)H(2), which is reduced by methylarsonate reductase to methylarsonite, Me-As(OH)2. Methylarsonite is also a substrate and it is converted into the much less toxic compound dimethylarsinate (cacodylate), Me(2)As(O)-OH. In Rattus norvegicus (Rat), this protein is Arsenite methyltransferase (As3mt).